Consider the following 775-residue polypeptide: Acetamidase regulatory protein (775 aa).

Polar residues predominate over residues 1–15 (MSSTAHNSQPSTGNG). Residues 1–20 (MSSTAHNSQPSTGNGVTKRK) are disordered. A DNA-binding region (zn(2)-C6 fungal-type) is located at residues 26-59 (CIHCHRRKVRCDARIVGLPCSNCRSAGKADCRIH). Residues 126 to 153 (PHSSYTNGNHLSNNRGSQPITETQTFTR) are compositionally biased toward polar residues. Disordered regions lie at residues 126-159 (PHSSYTNGNHLSNNRGSQPITETQTFTRQPGADR) and 630-699 (ATSE…HQNQ). Residues 630-644 (ATSERPRRFSTHDQN) are compositionally biased toward basic and acidic residues. Residues 674-689 (PRPPYEVPTPESPRMP) show a composition bias toward pro residues.

Its subcellular location is the nucleus. Functionally, positively regulates the expression of genes involved in the catabolism of certain amides, omega amino acids, and lactams. This Aspergillus oryzae (strain ATCC 42149 / RIB 40) (Yellow koji mold) protein is Acetamidase regulatory protein (amdR).